A 147-amino-acid chain; its full sequence is Putative pre-16S rRNA nuclease (147 aa).

The protein belongs to the YqgF nuclease family.

The protein resides in the cytoplasm. In terms of biological role, could be a nuclease involved in processing of the 5'-end of pre-16S rRNA. The protein is Putative pre-16S rRNA nuclease of Ureaplasma parvum serovar 3 (strain ATCC 27815 / 27 / NCTC 11736).